Consider the following 290-residue polypeptide: Probable transcriptional regulatory protein HAH1 (290 aa).

It belongs to the TACO1 family.

The protein resides in the mitochondrion. The chain is Probable transcriptional regulatory protein HAH1 from Saccharomyces cerevisiae (strain ATCC 204508 / S288c) (Baker's yeast).